The following is a 175-amino-acid chain: FMRFamide-like neuropeptides 1 (175 aa).

A signal peptide spans 1-21 (MTLLYQVGLLLLVAATYKVSA). The propeptide occupies 22–68 (ECCTPGATSDFCTVFSMLSTMEQNEVMNFIGENCDGDAEVALQKMEK). Tyr76 bears the Tyrosine amide mark. The propeptide occupies 79–86 (SAAVKSLG). Phenylalanine amide is present on residues Phe98, Phe108, Phe120, Phe130, Phe142, and Phe154. A propeptide spanning residues 157–165 (SFDNFDRES) is cleaved from the precursor. Phe173 bears the Phenylalanine amide mark.

This sequence belongs to the FARP (FMRFamide related peptide) family. In terms of processing, may be processed by convertase egl-3. As to expression, each flp gene is expressed in a distinct set of neurons. Flp-1 is expressed in the AVA interneurons, the M5 cholinergic pharyngeal motoneurons, and the AIA, AIY, AVE, AVK, RIG and RMG neurons.

The protein localises to the secreted. Together with flp-18, plays a homeostatic role by acting on the GABAergic neural transmission at neuromuscular junctions to prevent overexcitation of the locomotor circuit. Functionally, inhibits the activity of dissected pharyngeal myogenic muscle system. In terms of biological role, DPNFLRF-amide: Inhibits the activity of dissected pharyngeal myogenic muscle system. Its function is as follows. Acts as a ligand for the npr-22 receptor in vitro. The polypeptide is FMRFamide-like neuropeptides 1 (flp-1) (Caenorhabditis elegans).